Reading from the N-terminus, the 79-residue chain is Sigma-O factor regulatory protein RsoA (79 aa).

Functionally, together with RNA polymerase sigma factor SigO, positively regulates the expression of at least three operons, including oxdC-yvrL, sigO-rsoA and yvrJ. Required for the acid stress-dependent induction of the oxalate decarboxylase oxdC. In Bacillus subtilis (strain 168), this protein is Sigma-O factor regulatory protein RsoA (rsoA).